The primary structure comprises 329 residues: DNA-directed RNA polymerase subunit alpha (329 aa).

The interval 1–235 is alpha N-terminal domain (alpha-NTD); the sequence is MQGSVTEFLK…EQLDAFVDLR (235 aa). The alpha C-terminal domain (alpha-CTD) stretch occupies residues 249–329; sequence FDPILLRPVD…NWPPASIAED (81 aa).

The protein belongs to the RNA polymerase alpha chain family. Homodimer. The RNAP catalytic core consists of 2 alpha, 1 beta, 1 beta' and 1 omega subunit. When a sigma factor is associated with the core the holoenzyme is formed, which can initiate transcription.

The enzyme catalyses RNA(n) + a ribonucleoside 5'-triphosphate = RNA(n+1) + diphosphate. Its function is as follows. DNA-dependent RNA polymerase catalyzes the transcription of DNA into RNA using the four ribonucleoside triphosphates as substrates. This is DNA-directed RNA polymerase subunit alpha from Pasteurella multocida (strain Pm70).